A 394-amino-acid chain; its full sequence is 1-deoxy-D-xylulose 5-phosphate reductoisomerase (394 aa).

Residues threonine 10, glycine 11, serine 12, isoleucine 13, glycine 38, arginine 39, asparagine 40, and asparagine 123 each contribute to the NADPH site. Lysine 124 contacts 1-deoxy-D-xylulose 5-phosphate. Glutamate 125 is an NADPH binding site. Aspartate 149 is a binding site for Mn(2+). 1-deoxy-D-xylulose 5-phosphate-binding residues include serine 150, glutamate 151, serine 175, and histidine 198. A Mn(2+)-binding site is contributed by glutamate 151. Glycine 204 contributes to the NADPH binding site. Residues serine 211, asparagine 216, lysine 217, and glutamate 220 each contribute to the 1-deoxy-D-xylulose 5-phosphate site. Glutamate 220 lines the Mn(2+) pocket.

Belongs to the DXR family. Mg(2+) is required as a cofactor. It depends on Mn(2+) as a cofactor.

The enzyme catalyses 2-C-methyl-D-erythritol 4-phosphate + NADP(+) = 1-deoxy-D-xylulose 5-phosphate + NADPH + H(+). The protein operates within isoprenoid biosynthesis; isopentenyl diphosphate biosynthesis via DXP pathway; isopentenyl diphosphate from 1-deoxy-D-xylulose 5-phosphate: step 1/6. Catalyzes the NADPH-dependent rearrangement and reduction of 1-deoxy-D-xylulose-5-phosphate (DXP) to 2-C-methyl-D-erythritol 4-phosphate (MEP). In Cereibacter sphaeroides (strain ATCC 17029 / ATH 2.4.9) (Rhodobacter sphaeroides), this protein is 1-deoxy-D-xylulose 5-phosphate reductoisomerase.